We begin with the raw amino-acid sequence, 371 residues long: Deoxyhypusine synthase (371 aa).

NAD(+) is bound by residues 112-116 (SNLVT), 138-140 (SAG), E144, and D245. 143 to 144 (EE) is a spermidine binding site. Position 250 (D250) interacts with spermidine. An NAD(+)-binding site is contributed by G291. Position 296 (H296) interacts with spermidine. 316–317 (TG) provides a ligand contact to NAD(+). Residues 322–324 (GSD) and 331–337 (EAVSWGK) each bind spermidine. The active-site Nucleophile is the K337. An NAD(+)-binding site is contributed by 350–351 (EA).

The protein belongs to the deoxyhypusine synthase family. NAD(+) is required as a cofactor.

The catalysed reaction is [eIF5A protein]-L-lysine + spermidine = [eIF5A protein]-deoxyhypusine + propane-1,3-diamine. The protein operates within protein modification; eIF5A hypusination. In terms of biological role, catalyzes the NAD-dependent oxidative cleavage of spermidine and the subsequent transfer of the butylamine moiety of spermidine to the epsilon-amino group of a critical lysine residue of the eIF-5A precursor protein to form the intermediate deoxyhypusine residue. This is the first step of the post-translational modification of that lysine into an unusual amino acid residue named hypusine. Hypusination is unique to mature eIF-5A factor and is essential for its function. The protein is Deoxyhypusine synthase of Caenorhabditis elegans.